Consider the following 509-residue polypeptide: Putative Rieske 2Fe-2S iron-sulfur protein YhfW (509 aa).

The Rieske domain occupies 423 to 509; sequence KPDVQFEDIS…IKPLKQIDLD (87 aa). 4 residues coordinate [2Fe-2S] cluster: Cys-463, His-465, Cys-481, and His-484. Cys-468 and Cys-483 form a disulfide bridge.

The protein belongs to the Rieske iron-sulfur protein family. It depends on [2Fe-2S] cluster as a cofactor.

The chain is Putative Rieske 2Fe-2S iron-sulfur protein YhfW (yhfW) from Bacillus subtilis (strain 168).